Reading from the N-terminus, the 142-residue chain is Putative arsenate reductase (142 aa).

The protein belongs to the low molecular weight phosphotyrosine protein phosphatase family.

Its function is as follows. Reduces arsenate [As(V)] to arsenite [As(III)]. In Halobacterium salinarum (strain ATCC 700922 / JCM 11081 / NRC-1) (Halobacterium halobium), this protein is Putative arsenate reductase (arsC).